We begin with the raw amino-acid sequence, 255 residues long: Putative OPA3-like protein CG13603 (255 aa).

Positions 108–154 form a coiled coil; it reads KENKKNELAQSEKMELTNMLTEMNFRLERQDAQIREMTRVLADLDSR. Residues 168–187 are disordered; sequence VPFDPDTPDQSASARNPKKF. Positions 212-241 form a coiled coil; that stretch reads DGRNRKAKEALQHLDEVAVQLEQSLGEAAT.

This sequence belongs to the OPA3 family.

This Drosophila melanogaster (Fruit fly) protein is Putative OPA3-like protein CG13603.